The chain runs to 183 residues: Casparian strip membrane protein 2 (183 aa).

Over 1–23 (MDSGEQGETSKAPLNKGVSRGVS) the chain is Cytoplasmic. A helical transmembrane segment spans residues 24–44 (ILDLILRVIAVISTLASAIAM). At 45–71 (GTTNETLPLFTPFIQFKARYSDLPALT) the chain is on the extracellular side. N-linked (GlcNAc...) asparagine glycosylation occurs at Asn48. A helical transmembrane segment spans residues 72–92 (FFVVANSIVSAYLILSLPLSI). Residues 93-104 (AHIIRSGAKYSR) are Cytoplasmic-facing. The helical transmembrane segment at 105 to 125 (LVLIIFDAAMLALVTAASSAA) threads the bilayer. Over 126 to 158 (TAIVYLAHKGNVRANWLAICQQLDSFCERTSGS) the chain is Extracellular. Residues 159–179 (LVGSFGAMVLLILLILLSAMA) form a helical membrane-spanning segment. The Cytoplasmic segment spans residues 180-183 (LARR).

This sequence belongs to the Casparian strip membrane proteins (CASP) family. Homodimer and heterodimers.

Its subcellular location is the cell membrane. In terms of biological role, regulates membrane-cell wall junctions and localized cell wall deposition. Required for establishment of the Casparian strip membrane domain (CSD) and the subsequent formation of Casparian strips, a cell wall modification of the root endodermis that determines an apoplastic barrier between the intraorganismal apoplasm and the extraorganismal apoplasm and prevents lateral diffusion. The protein is Casparian strip membrane protein 2 of Triticum aestivum (Wheat).